Here is a 142-residue protein sequence, read N- to C-terminus: Probable inactive dual specificity protein phosphatase-like At4g18593 (142 aa).

Belongs to the protein-tyrosine phosphatase family. Non-receptor class dual specificity subfamily.

The sequence is that of Probable inactive dual specificity protein phosphatase-like At4g18593 from Arabidopsis thaliana (Mouse-ear cress).